Consider the following 198-residue polypeptide: Recombination protein RecR (198 aa).

The C4-type zinc finger occupies 57–72; that stretch reads CAMCNTFTEHEVCETC. The Toprim domain occupies 80–175; sequence ALLCVVETPG…KVSRLARGVP (96 aa).

It belongs to the RecR family.

May play a role in DNA repair. It seems to be involved in an RecBC-independent recombinational process of DNA repair. It may act with RecF and RecO. In Janthinobacterium sp. (strain Marseille) (Minibacterium massiliensis), this protein is Recombination protein RecR.